Here is a 363-residue protein sequence, read N- to C-terminus: Small ribosomal subunit biogenesis GTPase RsgA (363 aa).

Residues 112–268 (HQQVIAANID…LIDTPGMREL (157 aa)) enclose the CP-type G domain. GTP-binding positions include 157–160 (TKAD) and 210–218 (GSSGAGKST). 4 residues coordinate Zn(2+): Cys291, Cys296, His298, and Cys304. Residues 340–363 (RVAQNNRGKGSGKRPASIDRPGRR) form a disordered region.

The protein belongs to the TRAFAC class YlqF/YawG GTPase family. RsgA subfamily. In terms of assembly, monomer. Associates with 30S ribosomal subunit, binds 16S rRNA. Zn(2+) is required as a cofactor.

It is found in the cytoplasm. Functionally, one of several proteins that assist in the late maturation steps of the functional core of the 30S ribosomal subunit. Helps release RbfA from mature subunits. May play a role in the assembly of ribosomal proteins into the subunit. Circularly permuted GTPase that catalyzes slow GTP hydrolysis, GTPase activity is stimulated by the 30S ribosomal subunit. This is Small ribosomal subunit biogenesis GTPase RsgA from Xanthomonas oryzae pv. oryzae (strain PXO99A).